A 216-amino-acid polypeptide reads, in one-letter code: Chloramphenicol acetyltransferase (216 aa).

The active-site Proton acceptor is H189.

Belongs to the chloramphenicol acetyltransferase family. In terms of assembly, homotrimer.

It catalyses the reaction chloramphenicol + acetyl-CoA = chloramphenicol 3-acetate + CoA. Its function is as follows. This enzyme is an effector of chloramphenicol resistance in bacteria. This chain is Chloramphenicol acetyltransferase (cat), found in Staphylococcus aureus.